The sequence spans 91 residues: Small ribosomal subunit protein uS19 (91 aa).

It belongs to the universal ribosomal protein uS19 family.

Its function is as follows. Protein S19 forms a complex with S13 that binds strongly to the 16S ribosomal RNA. This is Small ribosomal subunit protein uS19 from Laribacter hongkongensis (strain HLHK9).